We begin with the raw amino-acid sequence, 271 residues long: DNA-binding protein HEXBP (271 aa).

2 stretches are compositionally biased toward basic and acidic residues: residues 1–12 (MSETEDVKRPRT) and 21–42 (CGKE…DERS). A disordered region spans residues 1-42 (MSETEDVKRPRTESSTSCRNCGKEGHYARECPEADSKGDERS). 4 consecutive CCHC-type zinc fingers follow at residues 16-33 (TSCR…ECPE), 43-60 (TTCF…ECPN), 70-87 (MTCF…DCPN), and 97-114 (FECY…DCPS). Positions 107 to 136 (HLSRDCPSSQGGSRGGYGQKRGRSGAQGGY) are disordered. The span at 118-136 (GSRGGYGQKRGRSGAQGGY) shows a compositional bias: gly residues. 5 CCHC-type zinc fingers span residues 140–157 (RTCY…DCPN), 168–185 (RTCY…DCPN), 196–213 (RKCY…ECPS), 222–239 (RACY…ECPE), and 253–270 (RTCY…DCPS).

The protein resides in the nucleus. Binds to single-stranded DNA located in the 5' hexanucleotide repeat region of the L.major leishmanolysin (GP63) gene. The sequence is that of DNA-binding protein HEXBP (HEXBP) from Leishmania major.